The chain runs to 81 residues: Large ribosomal subunit protein bL31B (81 aa).

The protein belongs to the bacterial ribosomal protein bL31 family. Type B subfamily. In terms of assembly, part of the 50S ribosomal subunit.

The chain is Large ribosomal subunit protein bL31B from Borreliella afzelii (strain PKo) (Borrelia afzelii).